Here is a 342-residue protein sequence, read N- to C-terminus: Ferredoxin--NADP reductase (342 aa).

FAD-binding residues include Cys-17, Asp-36, Gln-44, Tyr-49, Val-89, Phe-124, Asp-289, and Thr-330.

Belongs to the ferredoxin--NADP reductase type 2 family. Homodimer. It depends on FAD as a cofactor.

It carries out the reaction 2 reduced [2Fe-2S]-[ferredoxin] + NADP(+) + H(+) = 2 oxidized [2Fe-2S]-[ferredoxin] + NADPH. This is Ferredoxin--NADP reductase from Rhodopseudomonas palustris (strain ATCC BAA-98 / CGA009).